A 469-amino-acid chain; its full sequence is Acetyl-CoA decarbonylase/synthase complex subunit beta 2 (469 aa).

Residues C187, C190, C276, and C278 each contribute to the [Ni-Fe-S] cluster site.

The protein belongs to the CdhC family. As to quaternary structure, monomer. The ACDS complex is made up of alpha, epsilon, beta, gamma and delta chains with a probable stoichiometry of (alpha(2)epsilon(2))(4)-beta(8)-(gamma(1)delta(1))(8) (Potential). It depends on [Ni-Fe-S] cluster as a cofactor.

It carries out the reaction Co(I)-[corrinoid Fe-S protein] + acetyl-CoA + H(+) = methyl-Co(III)-[corrinoid Fe-S protein] + CO + CoA. Its function is as follows. Part of a complex that catalyzes the reversible cleavage of acetyl-CoA, allowing autotrophic growth from CO(2). The alpha-epsilon complex generates CO from CO(2), while the beta subunit (this protein) combines the CO with CoA and a methyl group to form acetyl-CoA. The methyl group, which is incorporated into acetyl-CoA, is transferred to the beta subunit by a corrinoid iron-sulfur protein (the gamma-delta complex). In Methanocaldococcus jannaschii (strain ATCC 43067 / DSM 2661 / JAL-1 / JCM 10045 / NBRC 100440) (Methanococcus jannaschii), this protein is Acetyl-CoA decarbonylase/synthase complex subunit beta 2 (cdhC2).